Reading from the N-terminus, the 208-residue chain is MKIVEVKHPLVKHKLGLMREHDISTKRFRELASEVGSLLTYEATSDLATEKVTIEGWNGPVQVEQIKGKKITVVPILRAGLGMMEGVLEHVPSARISVVGIYRNEETLEPVPYFQKLVSNIDERMALVVDPMLATGGSMIATIDLLKNAGCNSIKVLVLVAAPEGIAALEKAHPDVELYTASIDQGLNEHGYIIPGLGDAGDKIFGTK.

5-phospho-alpha-D-ribose 1-diphosphate is bound by residues R78, R103, and 130 to 138 (DPMLATGGS). Residues I193 and 198–200 (GDA) each bind uracil. Position 199 (D199) interacts with 5-phospho-alpha-D-ribose 1-diphosphate.

Belongs to the UPRTase family. It depends on Mg(2+) as a cofactor.

The enzyme catalyses UMP + diphosphate = 5-phospho-alpha-D-ribose 1-diphosphate + uracil. It participates in pyrimidine metabolism; UMP biosynthesis via salvage pathway; UMP from uracil: step 1/1. Its activity is regulated as follows. Allosterically activated by GTP. Catalyzes the conversion of uracil and 5-phospho-alpha-D-ribose 1-diphosphate (PRPP) to UMP and diphosphate. The polypeptide is Uracil phosphoribosyltransferase (Enterobacter sp. (strain 638)).